The sequence spans 396 residues: Putative protein IntB (396 aa).

The 81-residue stretch at 71 to 151 (RTFKEVAIEW…RTTAIMRYAV (81 aa)) folds into the Core-binding (CB) domain. Positions 174 to 367 (QHRPALELKR…EHLEERRLML (194 aa)) constitute a Tyr recombinase domain. Residues R213, K252, H316, R319, and H343 contribute to the active site. Y353 acts as the O-(3'-phospho-DNA)-tyrosine intermediate in catalysis.

Belongs to the 'phage' integrase family.

The sequence is that of Putative protein IntB (intB) from Escherichia coli (strain K12).